The primary structure comprises 222 residues: MNPDIKICGLKTPEAMDRALERGATHVGFIFFEKSPRYIEPDLAGKLAERARGKAKIVAVTVNPTNDDLDEIISLVRPDILQLHGNESPERVLTIKAVYNLPVMKAMSVRDADDLKRVEAYIGIADRFLFDAKPPAGSELPGGNGVSFDWSLMSWLDDRVDYMLSGGVNKDNFAQALASTRATGIDLSSGVESAPGVKDPKKIDEFFDAVAEACLPEPAAGS.

The protein belongs to the TrpF family.

The catalysed reaction is N-(5-phospho-beta-D-ribosyl)anthranilate = 1-(2-carboxyphenylamino)-1-deoxy-D-ribulose 5-phosphate. Its pathway is amino-acid biosynthesis; L-tryptophan biosynthesis; L-tryptophan from chorismate: step 3/5. The protein is N-(5'-phosphoribosyl)anthranilate isomerase of Rhizobium rhizogenes (strain K84 / ATCC BAA-868) (Agrobacterium radiobacter).